We begin with the raw amino-acid sequence, 333 residues long: MKNSLKMKNLLPALVITMAMSAVMSLCIAPNAYASKWDAKMTPEQVEATLDKKFAEGNYSPKGADSCLMCHKKSEKVMDLFKGVHGAIDSSKSPMAGLQCEACHGPLGQHNKGGNEPMITFGKQSTLSAEKQNSVCMSCHQDDKRVSWNGSHHDNADVACASCHQVHVAKDPVLSKNTEMEVCTSCHTKQKADMNKRSSHPLKWAQMTCSDCHNPHGSMTDSDLNKPSINETCYSCHAEKRGPKLWEHAPVTENCVTCHNPHGSVNDAMLKTRAPQLCQQCHASDGHASNAYLGNTGLGSNVGDNAFTGGRSCLNCHSQVHGSNHPSGKLLQR.

Residues 1-34 (MKNSLKMKNLLPALVITMAMSAVMSLCIAPNAYA) form the signal peptide.

This Shewanella baltica (strain OS185) protein is Multiheme cytochrome MtrA (mtrA).